The sequence spans 1047 residues: Jouberin (1047 aa).

Basic and acidic residues-rich tracts occupy residues 1-17 (MEPETPEKVDSAQEKVR), 29-40 (SREKTGIEEKGE), and 77-86 (LLHDDKLASE). 2 disordered regions span residues 1 to 40 (MEPETPEKVDSAQEKVRGKTPTADDSDDSREKTGIEEKGE) and 67 to 181 (EQLT…SRDS). The tract at residues 1–284 (MEPETPEKVD…IFNENFPYLL (284 aa)) is interaction with HAP1. A compositionally biased stretch (low complexity) spans 96–106 (PVPTKPESSPS). The span at 115 to 138 (GEQKKEGTPEDSQHMEGICSREQD) shows a compositional bias: basic and acidic residues. Residues 149-159 (PKPKKTKKKTK) are compositionally biased toward basic residues. The segment covering 172–181 (GVHEITSRDS) has biased composition (basic and acidic residues). WD repeat units lie at residues 457–499 (AGER…FMRE), 502–541 (GHLNIIYDLDWSKDDRYLVTSSSDGTARVWKNEINSTSTF), 545–585 (PHPS…DAAI), 592–631 (VHKSFVNSICFDDEGHHMYSGDCIGVIVVWDTYVKVNDVQ), 648–687 (FRGVPISYLEVHPNGKRLLIHTKDSTLRIMDLRILAARKF), 691–730 (ANYREKIHSTLTPCGTLLFSGSEDGIVYVWNPETGEQVAM), and 735–776 (PFKS…AQQE). Ser-853 carries the phosphoserine modification. The SH3 domain maps to 902 to 962 (DPPPMVVALY…PANHVASETL (61 aa)). Composition is skewed to basic and acidic residues over residues 963-987 (YRDSPPKVKERSPPLTPKEKTKPEK) and 1013-1040 (HSEKGKDQNVEDRGHKVDMETKKSEPVV). The segment at 963 to 1047 (YRDSPPKVKE…PVVRKVTLIE (85 aa)) is disordered. Ser-974 bears the Phosphoserine mark.

As to quaternary structure, self-associates. Part of the tectonic-like complex (also named B9 complex). Interacts with MKS1. Interacts with NPHP1; probably as heterodimers and/or AHI1(2):NPHP1(2) heterotetramers. Interacts (via SH3 domain) with the dynamin GTPase DNM2. Interacts with HAP1; probably as AHI1(2):HAP1(2) heterotetramers. Interacts with RAB8A. Interacts with CEND1. Interacts with SPATA7. In terms of tissue distribution, expressed in the retina (at protein level). Highly expressed in the brain. Highly expressed in the testis. Expressed in the kidney, thymus, heart, lung, spleen. Weakly expressed in the liver, stomach, pancreas, and embryo. Strongly expressed during periods of both cortical and cerebellar development.

Its subcellular location is the cytoplasm. It localises to the cytoskeleton. The protein localises to the cilium basal body. It is found in the microtubule organizing center. The protein resides in the centrosome. Its subcellular location is the centriole. It localises to the cell junction. The protein localises to the adherens junction. In terms of biological role, involved in vesicle trafficking and required for ciliogenesis, formation of primary non-motile cilium, and recruitment of RAB8A to the basal body of primary cilium. Component of the tectonic-like complex, a complex localized at the transition zone of primary cilia and acting as a barrier that prevents diffusion of transmembrane proteins between the cilia and plasma membranes. Involved in neuronal differentiation. As a positive modulator of classical Wnt signaling, may play a crucial role in ciliary signaling during cerebellum embryonic development. The chain is Jouberin (Ahi1) from Mus musculus (Mouse).